A 310-amino-acid chain; its full sequence is Phosphoribosylaminoimidazole-succinocarboxamide synthase (310 aa).

The protein belongs to the SAICAR synthetase family.

It catalyses the reaction 5-amino-1-(5-phospho-D-ribosyl)imidazole-4-carboxylate + L-aspartate + ATP = (2S)-2-[5-amino-1-(5-phospho-beta-D-ribosyl)imidazole-4-carboxamido]succinate + ADP + phosphate + 2 H(+). The protein operates within purine metabolism; IMP biosynthesis via de novo pathway; 5-amino-1-(5-phospho-D-ribosyl)imidazole-4-carboxamide from 5-amino-1-(5-phospho-D-ribosyl)imidazole-4-carboxylate: step 1/2. The chain is Phosphoribosylaminoimidazole-succinocarboxamide synthase from Xanthomonas campestris pv. campestris (strain B100).